The primary structure comprises 257 residues: MLAIISPAKTLDFETKIDGFVFSQPELTAYSQQLIDICKQFSPAEVASLMSISDKLASLNVARFAEWTMEHNEQNAKAALFAFKGDVYTGLEAETLTNAEIDYAQRHLRMLSGLYGLLKPLDLMQPYRLEMGTKLANPKGKDLYHFWDNIITQHLQQAIDAQEDNILVNLASDEYFGAVQAERLTAKIVKPVFLDEKNGKYKVISFYAKKARGMMVRFMLQTQPTSIEQLKAFNYGGYWFDETASTDTELVFKREEQ.

This sequence belongs to the UPF0246 family.

This chain is UPF0246 protein HAPS_0280, found in Glaesserella parasuis serovar 5 (strain SH0165) (Haemophilus parasuis).